Reading from the N-terminus, the 270-residue chain is Mediator of RNA polymerase II transcription subunit 4 (270 aa).

The interval 1–22 (MAASSSGEKEKERMGGVSGMTG) is disordered. At alanine 2 the chain carries N-acetylalanine. Residues 26 to 131 (TRERLLSALE…ATAVYQAKEK (106 aa)) are a coiled coil. Serine 32 carries the post-translational modification Phosphoserine. A disordered region spans residues 227-270 (MSVNMLPPNHSTDFLLEPPGHNKENEDDVEVMSTDSSSSSSDSD). The segment covering 259 to 270 (STDSSSSSSDSD) has biased composition (low complexity).

It belongs to the Mediator complex subunit 4 family. In terms of assembly, component of the Mediator complex, which is composed of MED1, MED4, MED6, MED7, MED8, MED9, MED10, MED11, MED12, MED13, MED13L, MED14, MED15, MED16, MED17, MED18, MED19, MED20, MED21, MED22, MED23, MED24, MED25, MED26, MED27, MED29, MED30, MED31, CCNC, CDK8 and CDC2L6/CDK11. The MED12, MED13, CCNC and CDK8 subunits form a distinct module termed the CDK8 module. Mediator containing the CDK8 module is less active than Mediator lacking this module in supporting transcriptional activation. Individual preparations of the Mediator complex lacking one or more distinct subunits have been variously termed ARC, CRSP, DRIP, PC2, SMCC and TRAP.

Its subcellular location is the nucleus. Its function is as follows. Component of the Mediator complex, a coactivator involved in the regulated transcription of nearly all RNA polymerase II-dependent genes. Mediator functions as a bridge to convey information from gene-specific regulatory proteins to the basal RNA polymerase II transcription machinery. Mediator is recruited to promoters by direct interactions with regulatory proteins and serves as a scaffold for the assembly of a functional preinitiation complex with RNA polymerase II and the general transcription factors. The chain is Mediator of RNA polymerase II transcription subunit 4 (Med4) from Rattus norvegicus (Rat).